The following is a 93-amino-acid chain: UPF0521 protein A (93 aa).

A coiled-coil region spans residues 2–58; the sequence is SLKEVITSLKNDFHSINKEIDSMKENNEKQEDKIFQEIKKLKLEMELLRKDNLSFKT.

This sequence belongs to the UPF0521 family.

The chain is UPF0521 protein A from Dictyostelium discoideum (Social amoeba).